The primary structure comprises 210 residues: NAD(P)H-quinone oxidoreductase subunit I (210 aa).

2 consecutive 4Fe-4S ferredoxin-type domains span residues 54-83 (GRIH…VDWA) and 94-123 (YSYS…VTED). [4Fe-4S] cluster contacts are provided by Cys63, Cys66, Cys69, Cys73, Cys103, Cys106, Cys109, and Cys113.

Belongs to the complex I 23 kDa subunit family. NDH-1 is composed of at least 11 different subunits. Requires [4Fe-4S] cluster as cofactor.

The protein resides in the cellular thylakoid membrane. It carries out the reaction a plastoquinone + NADH + (n+1) H(+)(in) = a plastoquinol + NAD(+) + n H(+)(out). It catalyses the reaction a plastoquinone + NADPH + (n+1) H(+)(in) = a plastoquinol + NADP(+) + n H(+)(out). NDH-1 shuttles electrons from an unknown electron donor, via FMN and iron-sulfur (Fe-S) centers, to quinones in the respiratory and/or the photosynthetic chain. The immediate electron acceptor for the enzyme in this species is believed to be plastoquinone. Couples the redox reaction to proton translocation, and thus conserves the redox energy in a proton gradient. In Synechococcus sp. (strain JA-2-3B'a(2-13)) (Cyanobacteria bacterium Yellowstone B-Prime), this protein is NAD(P)H-quinone oxidoreductase subunit I.